Consider the following 182-residue polypeptide: CDP-diacylglycerol--glycerol-3-phosphate 3-phosphatidyltransferase (182 aa).

The Cytoplasmic segment spans residues 1-12; the sequence is MQLNIPTWLTLF. A helical membrane pass occupies residues 13–37; it reads RVVLIPFFVLAFYLPFVWAPMVCAI. Residues 38–60 are Periplasmic-facing; sequence IFVFAAATDWFDGFLARRWKQTT. Residues 61-81 form a helical membrane-spanning segment; it reads RFGAFLDPVADKVMVAIALVL. Residues 82–86 lie on the Cytoplasmic side of the membrane; sequence VAEHY. The chain crosses the membrane as a helical span at residues 87–107; the sequence is HVWWITLPAATMIAREIIISS. The Periplasmic segment spans residues 108 to 145; the sequence is LREWMAEIGKRSSVAVSWIGKVKTTAQMGSLVGLLWRP. The helical transmembrane segment at 146–168 threads the bilayer; the sequence is DHNIELASFVLLYIAAVLTFWSM. Residues 169-181 lie on the Cytoplasmic side of the membrane; sequence FQYLNAAWKDLLE.

Belongs to the CDP-alcohol phosphatidyltransferase class-I family.

Its subcellular location is the cell inner membrane. It catalyses the reaction a CDP-1,2-diacyl-sn-glycerol + sn-glycerol 3-phosphate = a 1,2-diacyl-sn-glycero-3-phospho-(1'-sn-glycero-3'-phosphate) + CMP + H(+). It functions in the pathway phospholipid metabolism; phosphatidylglycerol biosynthesis; phosphatidylglycerol from CDP-diacylglycerol: step 1/2. Its function is as follows. Catalyzes the conversion of cytidine diphosphate diacylglycerol (CDP-DG) and glycerol 3-phosphate into phosphatidylglycerol. Essential for the synthesis of anionic phospholipids, thereby playing a role in balancing the ratio of zwitterionic and anionic phospholipids, which is thought to be important for normal membrane function. This is CDP-diacylglycerol--glycerol-3-phosphate 3-phosphatidyltransferase from Yersinia enterocolitica serotype O:8 / biotype 1B (strain NCTC 13174 / 8081).